Here is a 536-residue protein sequence, read N- to C-terminus: Glucose-6-phosphate isomerase (536 aa).

Glutamate 345 acts as the Proton donor in catalysis. Active-site residues include histidine 376 and lysine 505.

The protein belongs to the GPI family.

It localises to the cytoplasm. The enzyme catalyses alpha-D-glucose 6-phosphate = beta-D-fructose 6-phosphate. It participates in carbohydrate biosynthesis; gluconeogenesis. Its pathway is carbohydrate degradation; glycolysis; D-glyceraldehyde 3-phosphate and glycerone phosphate from D-glucose: step 2/4. Its function is as follows. Catalyzes the reversible isomerization of glucose-6-phosphate to fructose-6-phosphate. The chain is Glucose-6-phosphate isomerase from Ruegeria sp. (strain TM1040) (Silicibacter sp.).